The following is a 102-amino-acid chain: MAIGLEHYLTVAAILFTLGIFGIFLNRKNVIVILMSIELMLLAVNINLVAFSTHLGDLAGQVFALFVLTVAAAEAAIGLAILVVFFRNRGSIAVEDINMMKG.

The next 3 helical transmembrane spans lie at 5 to 25 (LEHYLTVAAILFTLGIFGIFL), 31 to 51 (IVILMSIELMLLAVNINLVAF), and 66 to 86 (FVLTVAAAEAAIGLAILVVFF).

Belongs to the complex I subunit 4L family. NDH-1 is composed of 14 different subunits. Subunits NuoA, H, J, K, L, M, N constitute the membrane sector of the complex.

Its subcellular location is the cell inner membrane. It carries out the reaction a quinone + NADH + 5 H(+)(in) = a quinol + NAD(+) + 4 H(+)(out). Functionally, NDH-1 shuttles electrons from NADH, via FMN and iron-sulfur (Fe-S) centers, to quinones in the respiratory chain. The immediate electron acceptor for the enzyme in this species is believed to be ubiquinone. Couples the redox reaction to proton translocation (for every two electrons transferred, four hydrogen ions are translocated across the cytoplasmic membrane), and thus conserves the redox energy in a proton gradient. In Parvibaculum lavamentivorans (strain DS-1 / DSM 13023 / NCIMB 13966), this protein is NADH-quinone oxidoreductase subunit K.